The following is a 317-amino-acid chain: Transaldolase (317 aa).

Residue Lys126 is the Schiff-base intermediate with substrate of the active site.

The protein belongs to the transaldolase family. Type 1 subfamily. Homodimer.

It localises to the cytoplasm. The enzyme catalyses D-sedoheptulose 7-phosphate + D-glyceraldehyde 3-phosphate = D-erythrose 4-phosphate + beta-D-fructose 6-phosphate. Its pathway is carbohydrate degradation; pentose phosphate pathway; D-glyceraldehyde 3-phosphate and beta-D-fructose 6-phosphate from D-ribose 5-phosphate and D-xylulose 5-phosphate (non-oxidative stage): step 2/3. In terms of biological role, transaldolase is important for the balance of metabolites in the pentose-phosphate pathway. The chain is Transaldolase from Burkholderia ambifaria (strain MC40-6).